A 714-amino-acid polypeptide reads, in one-letter code: Rho-GTPase-activating protein RGD2 (714 aa).

The region spanning 2–441 is the F-BAR domain; sequence LSFCDYFWSE…LENDIDPTAD (440 aa). In terms of domain architecture, DEP spans 218-298; sequence PKTDYKLPLI…WKNTAYMFAN (81 aa). In terms of domain architecture, Rho-GAP spans 475–704; sequence VDLETRCRLD…DLLTHKKQIF (230 aa).

In terms of assembly, interacts with CDC42 and RHO5.

Its function is as follows. Acts in signal transduction. Activates CDC42 and RHO5. The polypeptide is Rho-GTPase-activating protein RGD2 (RGD2) (Saccharomyces cerevisiae (strain ATCC 204508 / S288c) (Baker's yeast)).